A 308-amino-acid chain; its full sequence is PAK4-inhibitor inka1 (308 aa).

Positions 81 to 105 (EEEESASDPSAVSSPSSERSLEFDS) are disordered. The segment covering 87 to 98 (SDPSAVSSPSSE) has biased composition (low complexity). Inka box regions lie at residues 164-201 (DPED…DLPE) and 281-308 (DTDY…IGYI).

The protein belongs to the INKA family. As to quaternary structure, interacts with pak4/pak5.

Its subcellular location is the nucleus. The protein resides in the cytoplasm. Functionally, inhibitor of the serine/threonine-protein kinase pak4/pak5. Acts by binding pak4/pak5 in a substrate-like manner, inhibiting the protein kinase activity. Required for the proper migration of neural crest cells during embryonic development, probably by inhibiting pak4/pak5. The polypeptide is PAK4-inhibitor inka1 (Danio rerio (Zebrafish)).